A 498-amino-acid chain; its full sequence is MRINPTTSGPGVSALEKKNLGHIAQIIGPVLDVVFPPGKMPNIYNALVVKGRDTVSQQINVTCEVQQLLGNNRVRAVAMSATEGLMRGMEVIDTGAPLSVPVGGATLGRIFNVLGEPVDDLRPVDTGTTSPIHRSAPAFIQLDTKLSIFETGIKVVDLLAPYRRGGKIGLFGGAGVGKTVLIMELINNIAKAHGGVSVFGGVGERTREGNDLYMEMKESGVINEENIAESKVALVYGQMNEPPGARMRVGLTALTMAEYFRDVNEQDVLLFIDNIFRFVQAGSEVSALLGRMPSAVGYQPTLSTEMGTLQERITSTKEGSITSIQAVYVPADDLTDPAPATTFAHLDATTVLSRGLAAKGIYPAVDPLDSTSTMLQPQIVGEEHYETAQRVKQTLQRYKELQDIIAILGLDELSEEDRLTVARARKIERFLSQPFFVAEVFTGSPGKYVGLAETIRGFKLILSGELDSLPEQAFYLVGNIDEATAKATNLEMENNLKK.

172–179 (GGAGVGKT) is an ATP binding site.

This sequence belongs to the ATPase alpha/beta chains family. In terms of assembly, F-type ATPases have 2 components, CF(1) - the catalytic core - and CF(0) - the membrane proton channel. CF(1) has five subunits: alpha(3), beta(3), gamma(1), delta(1), epsilon(1). CF(0) has four main subunits: a(1), b(1), b'(1) and c(9-12).

It localises to the plastid. Its subcellular location is the chloroplast thylakoid membrane. It catalyses the reaction ATP + H2O + 4 H(+)(in) = ADP + phosphate + 5 H(+)(out). Produces ATP from ADP in the presence of a proton gradient across the membrane. The catalytic sites are hosted primarily by the beta subunits. The chain is ATP synthase subunit beta, chloroplastic from Populus tremuloides (Quaking aspen).